Reading from the N-terminus, the 766-residue chain is 5-methyltetrahydropteroyltriglutamate--homocysteine methyltransferase (766 aa).

5-methyltetrahydropteroyltri-L-glutamate is bound by residues Arg-16–Lys-19 and Lys-119. L-homocysteine is bound by residues Ile-440 to Ser-442 and Glu-493. L-methionine contacts are provided by residues Ile-440 to Ser-442 and Glu-493. 5-methyltetrahydropteroyltri-L-glutamate contacts are provided by residues Arg-524–Cys-525 and Trp-570. Asp-608 provides a ligand contact to L-homocysteine. Asp-608 provides a ligand contact to L-methionine. Position 614 (Glu-614) interacts with 5-methyltetrahydropteroyltri-L-glutamate. Positions 650, 652, and 674 each coordinate Zn(2+). Residue His-703 is the Proton donor of the active site. Cys-735 is a binding site for Zn(2+).

This sequence belongs to the vitamin-B12 independent methionine synthase family. Requires Zn(2+) as cofactor.

It catalyses the reaction 5-methyltetrahydropteroyltri-L-glutamate + L-homocysteine = tetrahydropteroyltri-L-glutamate + L-methionine. The protein operates within amino-acid biosynthesis; L-methionine biosynthesis via de novo pathway; L-methionine from L-homocysteine (MetE route): step 1/1. Functionally, catalyzes the transfer of a methyl group from 5-methyltetrahydrofolate to homocysteine resulting in methionine formation. The chain is 5-methyltetrahydropteroyltriglutamate--homocysteine methyltransferase from Pseudomonas aeruginosa (strain ATCC 15692 / DSM 22644 / CIP 104116 / JCM 14847 / LMG 12228 / 1C / PRS 101 / PAO1).